Here is an 810-residue protein sequence, read N- to C-terminus: Phospholipase D alpha 1 (810 aa).

Residues 1 to 36 constitute a propeptide that is removed on maturation; the sequence is MAQHLLHGTLHATIYEVDDLHTGGLRSGFFGKILAN. The C2 domain maps to 1-126; the sequence is MAQHLLHGTL…IHGEEVDQWV (126 aa). Ca(2+) is bound at residue Asp187. The 40-residue stretch at 327-366 folds into the PLD phosphodiesterase 1 domain; that stretch reads AMFTHHQKIVVVDSEMPSRGGSQMRRIVSFVGGIDLCDGR. Active-site residues include His332, Lys334, and Asp339. Residue His332 coordinates a 1,2-diacyl-sn-glycero-3-phosphate. Ca(2+)-binding residues include His372 and His406. Residues Gln522 and His661 each coordinate a 1,2-diacyl-sn-glycero-3-phosphate. A PLD phosphodiesterase 2 domain is found at 656-683; that stretch reads FMIYVHTKMMIVDDEYIIIGSANINQRS. Catalysis depends on residues His661, Lys663, and Asp668. A Ca(2+)-binding site is contributed by Glu722.

Belongs to the phospholipase D family. C2-PLD subfamily. Requires Ca(2+) as cofactor.

It is found in the cytoplasm. The protein localises to the membrane. The catalysed reaction is a 1,2-diacyl-sn-glycero-3-phosphocholine + H2O = a 1,2-diacyl-sn-glycero-3-phosphate + choline + H(+). Hydrolyzes glycerol-phospholipids at the terminal phosphodiesteric bond. Plays an important role in various cellular processes, including phytohormone action, vesicular trafficking, secretion, cytoskeletal arrangement, meiosis, tumor promotion, pathogenesis, membrane deterioration and senescence. The polypeptide is Phospholipase D alpha 1 (PLD1) (Brassica oleracea var. capitata (Cabbage)).